A 467-amino-acid chain; its full sequence is tRNA-2-methylthio-N(6)-dimethylallyladenosine synthase (467 aa).

The region spanning 5–125 is the MTTase N-terminal domain; the sequence is RKLHIKSYGC…LPQLLAQASR (121 aa). [4Fe-4S] cluster is bound by residues C14, C50, C88, C166, C170, and C173. The region spanning 152–384 is the Radical SAM core domain; the sequence is RARGVSAFVT…QSLIDSQQAA (233 aa). The 63-residue stretch at 387–449 folds into the TRAM domain; the sequence is KAAIGSVVDV…RYSLLGELVA (63 aa).

Belongs to the methylthiotransferase family. MiaB subfamily. Monomer. Requires [4Fe-4S] cluster as cofactor.

Its subcellular location is the cytoplasm. The catalysed reaction is N(6)-dimethylallyladenosine(37) in tRNA + (sulfur carrier)-SH + AH2 + 2 S-adenosyl-L-methionine = 2-methylsulfanyl-N(6)-dimethylallyladenosine(37) in tRNA + (sulfur carrier)-H + 5'-deoxyadenosine + L-methionine + A + S-adenosyl-L-homocysteine + 2 H(+). Functionally, catalyzes the methylthiolation of N6-(dimethylallyl)adenosine (i(6)A), leading to the formation of 2-methylthio-N6-(dimethylallyl)adenosine (ms(2)i(6)A) at position 37 in tRNAs that read codons beginning with uridine. The chain is tRNA-2-methylthio-N(6)-dimethylallyladenosine synthase from Bradyrhizobium sp. (strain ORS 278).